Here is a 477-residue protein sequence, read N- to C-terminus: Glutamyl-tRNA reductase (477 aa).

Substrate-binding positions include 49-52 (TCNR), Ser109, 114-116 (EGQ), and Gln120. Cys50 (nucleophile) is an active-site residue. 221 to 226 (GAGSMS) contacts NADP(+).

Belongs to the glutamyl-tRNA reductase family. In terms of assembly, homodimer.

The enzyme catalyses (S)-4-amino-5-oxopentanoate + tRNA(Glu) + NADP(+) = L-glutamyl-tRNA(Glu) + NADPH + H(+). Its pathway is porphyrin-containing compound metabolism; protoporphyrin-IX biosynthesis; 5-aminolevulinate from L-glutamyl-tRNA(Glu): step 1/2. Functionally, catalyzes the NADPH-dependent reduction of glutamyl-tRNA(Glu) to glutamate 1-semialdehyde (GSA). The chain is Glutamyl-tRNA reductase from Thermobifida fusca (strain YX).